Reading from the N-terminus, the 218-residue chain is MGQRINPLGFRLGVTQNHRSHWFAQKKYYSEDLQEDEEIRNCIENYVRRHMKNYSNYGGIARVEIRRKIDLIQVEIHIGFPNLLIEDRGRGIEQLRTDVRNMLNSANRKLNISIAKVAKPYGVPNILAEYIALQLEDRVSFRKTVKKAIELAEQADIRGIQIQIAGRLDGNEIARVEWARGGRVPLQTIRARIDHCYYPAKTIYGVLGIKIWIFGDEE.

A KH type-2 domain is found at 47-118; the sequence is VRRHMKNYSN…KLNISIAKVA (72 aa).

The protein belongs to the universal ribosomal protein uS3 family. In terms of assembly, part of the 30S ribosomal subunit.

It is found in the plastid. The protein resides in the chloroplast. The polypeptide is Small ribosomal subunit protein uS3c (rps3) (Ginkgo biloba (Ginkgo)).